A 122-amino-acid polypeptide reads, in one-letter code: Large ribosomal subunit protein uL14 (122 aa).

Belongs to the universal ribosomal protein uL14 family. In terms of assembly, part of the 50S ribosomal subunit. Forms a cluster with proteins L3 and L19. In the 70S ribosome, L14 and L19 interact and together make contacts with the 16S rRNA in bridges B5 and B8.

Its function is as follows. Binds to 23S rRNA. Forms part of two intersubunit bridges in the 70S ribosome. The polypeptide is Large ribosomal subunit protein uL14 (Enterococcus faecalis (strain ATCC 700802 / V583)).